The sequence spans 253 residues: Phosphate import ATP-binding protein PstB (253 aa).

One can recognise an ABC transporter domain in the interval 7-248 (IKVRDLNLYY…PRDRRTEDYI (242 aa)). 39 to 46 (GPSGCGKS) is an ATP binding site.

Belongs to the ABC transporter superfamily. Phosphate importer (TC 3.A.1.7) family. As to quaternary structure, the complex is composed of two ATP-binding proteins (PstB), two transmembrane proteins (PstC and PstA) and a solute-binding protein (PstS).

It is found in the cell membrane. It carries out the reaction phosphate(out) + ATP + H2O = ADP + 2 phosphate(in) + H(+). Its function is as follows. Part of the ABC transporter complex PstSACB involved in phosphate import. Responsible for energy coupling to the transport system. In Carboxydothermus hydrogenoformans (strain ATCC BAA-161 / DSM 6008 / Z-2901), this protein is Phosphate import ATP-binding protein PstB.